The following is a 283-amino-acid chain: Bifunctional protein FolD (283 aa).

Residues 165 to 167 (GRG), T192, and V233 each bind NADP(+).

This sequence belongs to the tetrahydrofolate dehydrogenase/cyclohydrolase family. As to quaternary structure, homodimer.

The enzyme catalyses (6R)-5,10-methylene-5,6,7,8-tetrahydrofolate + NADP(+) = (6R)-5,10-methenyltetrahydrofolate + NADPH. It carries out the reaction (6R)-5,10-methenyltetrahydrofolate + H2O = (6R)-10-formyltetrahydrofolate + H(+). The protein operates within one-carbon metabolism; tetrahydrofolate interconversion. Catalyzes the oxidation of 5,10-methylenetetrahydrofolate to 5,10-methenyltetrahydrofolate and then the hydrolysis of 5,10-methenyltetrahydrofolate to 10-formyltetrahydrofolate. The sequence is that of Bifunctional protein FolD from Thermobifida fusca (strain YX).